The sequence spans 58 residues: uncharacterized protein (58 aa).

It localises to the plastid. The protein localises to the chloroplast. This is an uncharacterized protein from Porphyra purpurea (Red seaweed).